We begin with the raw amino-acid sequence, 183 residues long: UPF0397 protein VFMJ11_1662 (183 aa).

The next 5 membrane-spanning stretches (helical) occupy residues 8-28 (VVVI…MFGI), 41-61 (AVLA…VGFI), 75-95 (WLTW…FPII), 110-130 (FLIF…TSAF), and 147-167 (LCII…FILN).

The protein belongs to the UPF0397 family.

The protein localises to the cell membrane. The sequence is that of UPF0397 protein VFMJ11_1662 from Aliivibrio fischeri (strain MJ11) (Vibrio fischeri).